The chain runs to 378 residues: MKILVDENMPYARELFSRLGEVKAVPGRPIPVEELNHADALMVRSVTKVNESLLSGTPINFVGTATAGTDHVDEAWLKQAGIGFSAAPGCNAIAVVEYVFSALLMLAERDGFSLRDRTIGIVGVGNVGSRLQTRLEALGIRTLLCDPPRAARGDEGDFRTLDELVQEADVLTFHTPLYKDGPYKTLHLADETLIRRLKPGAILINACRGPVVDNAALLARLNAGQPLSVVLDVWEGEPDLNVALLEAVDIGTSHIAGYTLEGKARGTTQVFEAYSAFIGREQRVALETLLPAPEFGRITLHGPLDQPTLKRLAHLVYDVRRDDAPLRKVAGIPGEFDKLRKNYLERREWSSLYVMCDDETAAALLCKLGFNAVHHPAH.

The substrate site is built by Ser45 and Thr66. Positions 146 and 175 each coordinate NAD(+). Residue Arg208 is part of the active site. NAD(+) is bound at residue Asp232. Residue Glu237 is part of the active site. The active-site Proton donor is His254. Gly257 lines the NAD(+) pocket. Tyr258 is a binding site for substrate.

The protein belongs to the D-isomer specific 2-hydroxyacid dehydrogenase family. PdxB subfamily. As to quaternary structure, homodimer.

It localises to the cytoplasm. The catalysed reaction is 4-phospho-D-erythronate + NAD(+) = (R)-3-hydroxy-2-oxo-4-phosphooxybutanoate + NADH + H(+). It participates in cofactor biosynthesis; pyridoxine 5'-phosphate biosynthesis; pyridoxine 5'-phosphate from D-erythrose 4-phosphate: step 2/5. In terms of biological role, catalyzes the oxidation of erythronate-4-phosphate to 3-hydroxy-2-oxo-4-phosphonooxybutanoate. The protein is Erythronate-4-phosphate dehydrogenase of Salmonella agona (strain SL483).